Consider the following 160-residue polypeptide: Phosphopantetheine adenylyltransferase (160 aa).

Threonine 11 is a substrate binding site. ATP is bound by residues 11–12 and histidine 19; that span reads TF. Positions 43, 75, and 89 each coordinate substrate. Residues 90–92, glutamate 100, and 125–131 each bind ATP; these read GLR and HMFVSAS.

It belongs to the bacterial CoaD family. In terms of assembly, homohexamer. The cofactor is Mg(2+).

The protein resides in the cytoplasm. The enzyme catalyses (R)-4'-phosphopantetheine + ATP + H(+) = 3'-dephospho-CoA + diphosphate. Its pathway is cofactor biosynthesis; coenzyme A biosynthesis; CoA from (R)-pantothenate: step 4/5. Functionally, reversibly transfers an adenylyl group from ATP to 4'-phosphopantetheine, yielding dephospho-CoA (dPCoA) and pyrophosphate. The protein is Phosphopantetheine adenylyltransferase of Methylobacillus flagellatus (strain ATCC 51484 / DSM 6875 / VKM B-1610 / KT).